A 109-amino-acid chain; its full sequence is Ribonuclease (109 aa).

The Proton acceptor role is filled by glutamate 72. Histidine 101 serves as the catalytic Proton donor.

Belongs to the ribonuclease N1/T1 family.

It is found in the secreted. In terms of biological role, hydrolyzes phosphodiester bonds in RNA, poly- and oligoribonucleotides resulting in 3'-nucleoside monophosphates via 2',3'-cyclophosphate intermediates. The sequence is that of Ribonuclease from Heyndrickxia coagulans (Weizmannia coagulans).